Consider the following 248-residue polypeptide: Ubiquinone/menaquinone biosynthesis C-methyltransferase UbiE (248 aa).

Residues Thr71, Asp92, and 120–121 contribute to the S-adenosyl-L-methionine site; that span reads DA.

Belongs to the class I-like SAM-binding methyltransferase superfamily. MenG/UbiE family.

The enzyme catalyses a 2-demethylmenaquinol + S-adenosyl-L-methionine = a menaquinol + S-adenosyl-L-homocysteine + H(+). It carries out the reaction a 2-methoxy-6-(all-trans-polyprenyl)benzene-1,4-diol + S-adenosyl-L-methionine = a 5-methoxy-2-methyl-3-(all-trans-polyprenyl)benzene-1,4-diol + S-adenosyl-L-homocysteine + H(+). It participates in quinol/quinone metabolism; menaquinone biosynthesis; menaquinol from 1,4-dihydroxy-2-naphthoate: step 2/2. It functions in the pathway cofactor biosynthesis; ubiquinone biosynthesis. Methyltransferase required for the conversion of demethylmenaquinol (DMKH2) to menaquinol (MKH2) and the conversion of 2-polyprenyl-6-methoxy-1,4-benzoquinol (DDMQH2) to 2-polyprenyl-3-methyl-6-methoxy-1,4-benzoquinol (DMQH2). The sequence is that of Ubiquinone/menaquinone biosynthesis C-methyltransferase UbiE from Methylococcus capsulatus (strain ATCC 33009 / NCIMB 11132 / Bath).